Consider the following 348-residue polypeptide: 4-hydroxy-3-methylbut-2-en-1-yl diphosphate synthase (flavodoxin) (348 aa).

[4Fe-4S] cluster is bound by residues Cys263, Cys266, Cys298, and Glu305.

Belongs to the IspG family. It depends on [4Fe-4S] cluster as a cofactor.

The catalysed reaction is (2E)-4-hydroxy-3-methylbut-2-enyl diphosphate + oxidized [flavodoxin] + H2O + 2 H(+) = 2-C-methyl-D-erythritol 2,4-cyclic diphosphate + reduced [flavodoxin]. It functions in the pathway isoprenoid biosynthesis; isopentenyl diphosphate biosynthesis via DXP pathway; isopentenyl diphosphate from 1-deoxy-D-xylulose 5-phosphate: step 5/6. Its function is as follows. Converts 2C-methyl-D-erythritol 2,4-cyclodiphosphate (ME-2,4cPP) into 1-hydroxy-2-methyl-2-(E)-butenyl 4-diphosphate. In Dehalococcoides mccartyi (strain CBDB1), this protein is 4-hydroxy-3-methylbut-2-en-1-yl diphosphate synthase (flavodoxin).